A 278-amino-acid chain; its full sequence is 2-dehydro-3-deoxyphosphooctonate aldolase (278 aa).

It belongs to the KdsA family.

It localises to the cytoplasm. The catalysed reaction is D-arabinose 5-phosphate + phosphoenolpyruvate + H2O = 3-deoxy-alpha-D-manno-2-octulosonate-8-phosphate + phosphate. It participates in carbohydrate biosynthesis; 3-deoxy-D-manno-octulosonate biosynthesis; 3-deoxy-D-manno-octulosonate from D-ribulose 5-phosphate: step 2/3. It functions in the pathway bacterial outer membrane biogenesis; lipopolysaccharide biosynthesis. This chain is 2-dehydro-3-deoxyphosphooctonate aldolase, found in Bartonella quintana (strain Toulouse) (Rochalimaea quintana).